Consider the following 75-residue polypeptide: UPF0154 protein MYPU_1460 (75 aa).

Residues 8-28 traverse the membrane as a helical segment; it reads GLIVGLSILFFIIGGVVAFFV.

Belongs to the UPF0154 family.

It localises to the membrane. The sequence is that of UPF0154 protein MYPU_1460 from Mycoplasmopsis pulmonis (strain UAB CTIP) (Mycoplasma pulmonis).